Here is a 734-residue protein sequence, read N- to C-terminus: Photosystem I P700 chlorophyll a apoprotein A2 (734 aa).

Transmembrane regions (helical) follow at residues 46–69 (IFAS…FHVA), 135–158 (LYTA…LHLQ), 175–199 (LNHH…HVAI), 273–291 (IAHH…GHQY), 330–353 (LHFQ…QHIY), 369–395 (AALY…IFFI), 417–439 (AIIS…LYVH), and 517–535 (FLVH…LILV). [4Fe-4S] cluster contacts are provided by Cys-559 and Cys-568. The next 2 helical transmembrane spans lie at 575–596 (AFYL…YFHW) and 643–665 (LGVW…MFLI). His-654, Met-662, and Tyr-670 together coordinate chlorophyll a. Position 671 (Trp-671) interacts with phylloquinone. Residues 707–727 (LVGLVHFSVGYVLTYGSFLIA) form a helical membrane-spanning segment.

Belongs to the PsaA/PsaB family. As to quaternary structure, the PsaA/B heterodimer binds the P700 chlorophyll special pair and subsequent electron acceptors. PSI consists of a core antenna complex that captures photons, and an electron transfer chain that converts photonic excitation into a charge separation. The eukaryotic PSI reaction center is composed of at least 11 subunits. The cofactor is P700 is a chlorophyll a/chlorophyll a' dimer, A0 is one or more chlorophyll a, A1 is one or both phylloquinones and FX is a shared 4Fe-4S iron-sulfur center..

It is found in the plastid. Its subcellular location is the chloroplast thylakoid membrane. It catalyses the reaction reduced [plastocyanin] + hnu + oxidized [2Fe-2S]-[ferredoxin] = oxidized [plastocyanin] + reduced [2Fe-2S]-[ferredoxin]. Its function is as follows. PsaA and PsaB bind P700, the primary electron donor of photosystem I (PSI), as well as the electron acceptors A0, A1 and FX. PSI is a plastocyanin/cytochrome c6-ferredoxin oxidoreductase, converting photonic excitation into a charge separation, which transfers an electron from the donor P700 chlorophyll pair to the spectroscopically characterized acceptors A0, A1, FX, FA and FB in turn. Oxidized P700 is reduced on the lumenal side of the thylakoid membrane by plastocyanin or cytochrome c6. The chain is Photosystem I P700 chlorophyll a apoprotein A2 from Oltmannsiellopsis viridis (Marine flagellate).